The following is a 390-amino-acid chain: Neuromedin-B receptor (390 aa).

The interval 1 to 20 (MPPRSLPNLSLPTEASESEL) is disordered. At 1-41 (MPPRSLPNLSLPTEASESELEPEVWENDFLPDSDGTTAELV) the chain is on the extracellular side. Asn-8 carries an N-linked (GlcNAc...) asparagine glycan. The chain crosses the membrane as a helical span at residues 42–65 (IRCVIPSLYLIIISVGLLGNIMLV). Residues 66-79 (KIFLTNSTMRSVPN) are Cytoplasmic-facing. Residues 80–99 (IFISNLAAGDLLLLLTCVPV) traverse the membrane as a helical segment. The Extracellular segment spans residues 100–117 (DASRYFFDEWVFGKLGCK). Cys-116 and Cys-198 are disulfide-bonded. The helical transmembrane segment at 118 to 139 (LIPAIQLTSVGVSVFTLTALSA) threads the bilayer. Residues 140-156 (DRYRAIVNPMDMQTSGV) are Cytoplasmic-facing. Residues 157–177 (VLWTSLKAVGIWVVSVLLAVP) traverse the membrane as a helical segment. Topologically, residues 178-211 (EAVFSEVARIGSSDNSSFTACIPYPQTDELHPKI) are extracellular. N-linked (GlcNAc...) asparagine glycosylation is present at Asn-192. Residues 212–235 (HSVLIFLVYFLIPLVIISIYYYHI) traverse the membrane as a helical segment. The Cytoplasmic portion of the chain corresponds to 236-266 (AKTLIRSAHNLPGEYNEHTKKQMETRKRLAK). A helical transmembrane segment spans residues 267–287 (IVLVFVGCFVFCWFPNHILYL). Over 288–299 (YRSFNYKEIDPS) the chain is Extracellular. The chain crosses the membrane as a helical span at residues 300–327 (LGHMIVTLVARVLSFSNSCVNPFALYLL). At 328 to 390 (SESFRKHFNS…GHSTKQEIAL (63 aa)) the chain is on the cytoplasmic side. Cys-341 carries S-palmitoyl cysteine lipidation. A Phosphoserine modification is found at Ser-352.

This sequence belongs to the G-protein coupled receptor 1 family. In terms of tissue distribution, brain (olfactory bulb and central thalamic regions), and esophagus.

The protein resides in the cell membrane. Its function is as follows. Receptor for neuromedin-B. Contributes to the maintenance of basal sigh rate through signaling in the pre-Botzinger complex, a cluster of several thousand neurons in the ventrolateral medulla responsible for inspiration during respiratory activity. Contributes to the induction of sneezing following exposure to chemical irritants or allergens which causes release of NMB by nasal sensory neurons and activation of NMBR-expressing neurons in the sneeze-evoking region of the brainstem. These in turn activate neurons of the caudal ventral respiratory group, giving rise to the sneezing response. Contributes to induction of acute itch, possibly through its activation on dorsal root ganglion neurons by the NMB peptide. Plays a role in the innate immune response to influenza A virus infection by enhancing interferon alpha expression and reducing expression of IL6. Plays a role in CSF1-induced proliferation of osteoclast precursors by contributing to the positive regulation of the expression of the CSF1 receptor CSF1R. The protein is Neuromedin-B receptor (Nmbr) of Rattus norvegicus (Rat).